Consider the following 504-residue polypeptide: Heat shock 70 kDa protein 14 (504 aa).

This sequence belongs to the heat shock protein 70 family. In terms of assembly, component of ribosome-associated complex (RAC).

The protein localises to the cytoplasm. Its subcellular location is the cytosol. Functionally, component of the ribosome-associated complex (RAC), a complex involved in folding or maintaining nascent polypeptides in a folding-competent state. This chain is Heat shock 70 kDa protein 14 (hspa14), found in Danio rerio (Zebrafish).